A 403-amino-acid chain; its full sequence is Alkaline protease 1 (403 aa).

The N-terminal stretch at 1–21 (MLSIKRTLLLLGAVLPAVFGA) is a signal peptide. Positions 22–125 (PVQETRRAAQ…QIWYIDALTT (104 aa)) are excised as a propeptide. The 85-residue stretch at 36–120 (KYIVTFKPGT…HVEEDQIWYI (85 aa)) folds into the Inhibitor I9 domain. In terms of domain architecture, Peptidase S8 spans 130-403 (PWGLGSISHK…PNKLAYNGNA (274 aa)). Residues Asp162 and His193 each act as charge relay system in the active site. 2 N-linked (GlcNAc...) asparagine glycosylation sites follow: Asn253 and Asn307. Ser349 functions as the Charge relay system in the catalytic mechanism.

It belongs to the peptidase S8 family.

The protein localises to the secreted. The catalysed reaction is Hydrolysis of proteins with broad specificity, and of Bz-Arg-OEt &gt; Ac-Tyr-OEt. Does not hydrolyze peptide amides.. Secreted alkaline protease that allows assimilation of proteinaceous substrates. This is Alkaline protease 1 (alp1) from Neosartorya fischeri (strain ATCC 1020 / DSM 3700 / CBS 544.65 / FGSC A1164 / JCM 1740 / NRRL 181 / WB 181) (Aspergillus fischerianus).